Here is a 1830-residue protein sequence, read N- to C-terminus: Urea amidolyase (1830 aa).

ATP-binding positions include 115–122, K740, E823, and N858; that span reads GAIVIGKT. A Biotin carboxylation domain is found at 625–1068; it reads PFETVLIANR…ATKILDSYDY (444 aa). The 198-residue stretch at 744–941 folds into the ATP-grasp domain; sequence REIAEKAGVP…LVEWMLRIAA (198 aa). Positions 1752 to 1830 constitute a Biotinyl-binding domain; sequence AVEEEYPEDA…DAGDLVAVIQ (79 aa). An N6-biotinyllysine modification is found at K1796.

This sequence belongs to the DUR1,2 family. Monomer. It depends on biotin as a cofactor.

The enzyme catalyses urea + hydrogencarbonate + ATP = urea-1-carboxylate + ADP + phosphate + H(+). The catalysed reaction is urea-1-carboxylate + H2O + 3 H(+) = 2 NH4(+) + 2 CO2. The protein operates within nitrogen metabolism; urea degradation; CO(2) and NH(3) from urea (allophanate route): step 1/2. Its pathway is nitrogen metabolism; urea degradation; CO(2) and NH(3) from urea (allophanate route): step 2/2. Functionally, involved in uracil catabolism. Hydrolysis of urea to ammonia and CO(2). This chain is Urea amidolyase (DUR1,2), found in Lachancea kluyveri (Yeast).